Here is a 156-residue protein sequence, read N- to C-terminus: Small ribosomal subunit protein uS7c (156 aa).

It belongs to the universal ribosomal protein uS7 family. Part of the 30S ribosomal subunit.

Its subcellular location is the plastid. It is found in the chloroplast. Functionally, one of the primary rRNA binding proteins, it binds directly to 16S rRNA where it nucleates assembly of the head domain of the 30S subunit. The sequence is that of Small ribosomal subunit protein uS7c (rps7) from Bowenia serrulata (Byfield fern).